Consider the following 88-residue polypeptide: uncharacterized protein (88 aa).

This is an uncharacterized protein from Mycobacterium tuberculosis (strain CDC 1551 / Oshkosh).